We begin with the raw amino-acid sequence, 492 residues long: Glutamate--tRNA ligase (492 aa).

Residues 13–23 carry the 'HIGH' region motif; sequence PSPTGTPHVGM. Residues 257–261 carry the 'KMSKS' region motif; it reads KLSKR. Lysine 260 contributes to the ATP binding site.

The protein belongs to the class-I aminoacyl-tRNA synthetase family. Glutamate--tRNA ligase type 1 subfamily. Monomer.

It is found in the cytoplasm. The catalysed reaction is tRNA(Glu) + L-glutamate + ATP = L-glutamyl-tRNA(Glu) + AMP + diphosphate. Functionally, catalyzes the attachment of glutamate to tRNA(Glu) in a two-step reaction: glutamate is first activated by ATP to form Glu-AMP and then transferred to the acceptor end of tRNA(Glu). This is Glutamate--tRNA ligase from Mycolicibacterium paratuberculosis (strain ATCC BAA-968 / K-10) (Mycobacterium paratuberculosis).